A 198-amino-acid chain; its full sequence is Shikimate kinase (198 aa).

Gly26 to Gln31 serves as a coordination point for ATP. Ser30 serves as a coordination point for Mg(2+). Substrate is bound by residues Asp48, Arg72, and Gly94. Arg132 lines the ATP pocket. Position 151 (Arg151) interacts with substrate. Gln167 is an ATP binding site.

Belongs to the shikimate kinase family. As to quaternary structure, monomer. Mg(2+) is required as a cofactor.

The protein localises to the cytoplasm. It carries out the reaction shikimate + ATP = 3-phosphoshikimate + ADP + H(+). It participates in metabolic intermediate biosynthesis; chorismate biosynthesis; chorismate from D-erythrose 4-phosphate and phosphoenolpyruvate: step 5/7. Its function is as follows. Catalyzes the specific phosphorylation of the 3-hydroxyl group of shikimic acid using ATP as a cosubstrate. The sequence is that of Shikimate kinase from Prochlorococcus marinus (strain NATL2A).